Here is a 797-residue protein sequence, read N- to C-terminus: Inactive deaminase YBR284W (797 aa).

Residues 627-647 (LVYLFYLSQIPMVVAPLNSIV) traverse the membrane as a helical segment.

Belongs to the metallo-dependent hydrolases superfamily. Adenosine and AMP deaminases family.

Its subcellular location is the membrane. The chain is Inactive deaminase YBR284W from Saccharomyces cerevisiae (strain ATCC 204508 / S288c) (Baker's yeast).